Here is a 777-residue protein sequence, read N- to C-terminus: BRCA1-associated RING domain protein 1 (777 aa).

Positions 1–32 (MPDNRQPRNRQPRIRSGNEPRSAPAMEPDGRG) are disordered. The interaction with BRCA1 stretch occupies residues 26–119 (MEPDGRGAWA…KLRNLLHDNE (94 aa)). The segment at 50-87 (CSRCTNILREPVCLGGCEHIFCSNCVSDCIGTGCPVCY) adopts an RING-type zinc-finger fold. Residues lysine 160 and lysine 170 each participate in a glycyl lysine isopeptide (Lys-Gly) (interchain with G-Cter in SUMO2) cross-link. The segment at 167-211 (PAIKKDASAQQDSYEFVSPSPPADVSERAKKASARSGKKQKKKTL) is disordered. A Phosphoserine modification is found at serine 186. Over residues 197–209 (KASARSGKKQKKK) the composition is skewed to basic residues. Phosphothreonine is present on threonine 299. The tract at residues 356 to 404 (NIPLPECSSPPSCKRKVGGTSGRKNSNMSDEFISLSPGTPPSTLSSSSY) is disordered. Residues 389 to 404 (SLSPGTPPSTLSSSSY) show a composition bias toward low complexity. Serine 391 is modified (phosphoserine). The residue at position 394 (threonine 394) is a Phosphothreonine. Lysine 423 is covalently cross-linked (Glycyl lysine isopeptide (Lys-Gly) (interchain with G-Cter in SUMO2)). ANK repeat units lie at residues 427 to 459 (RGET…VKDH), 460 to 492 (AGWT…TTGY), and 493 to 525 (QNDS…AVNI). The ANK 4; degenerate repeat unit spans residues 526–546 (FGLRPVDYTDDESMKSLLLLP). Lysine 548 is covalently cross-linked (Glycyl lysine isopeptide (Lys-Gly) (interchain with G-Cter in SUMO2)). The segment at 554-558 (ASHCS) is flexible linker. BRCT domains are found at residues 560–653 (MNTG…KYEI) and 667–777 (LLPK…PLDS).

Homo- and heterodimer. Heterodimer (RING-type zinc finger) with BRCA1. Heterodimer (via ANK repeats and BRCT domains) with CSTF1/CSTF-50. Component of the BRCA1-A complex, at least composed of the BRCA1, BARD1, UIMC1/RAP80, ABRAXAS1, BRCC3/BRCC36, BABAM2 and BABAM1/NBA1. Interacts with UBXN1. Processed during apoptosis. The homodimer is more susceptible to proteolytic cleavage than the BARD1/BRCA1 heterodimer.

Its subcellular location is the nucleus. The catalysed reaction is S-ubiquitinyl-[E2 ubiquitin-conjugating enzyme]-L-cysteine + [acceptor protein]-L-lysine = [E2 ubiquitin-conjugating enzyme]-L-cysteine + N(6)-ubiquitinyl-[acceptor protein]-L-lysine.. It functions in the pathway protein modification; protein ubiquitination. Its function is as follows. E3 ubiquitin-protein ligase. The BRCA1-BARD1 heterodimer specifically mediates the formation of 'Lys-6'-linked polyubiquitin chains and coordinates a diverse range of cellular pathways such as DNA damage repair, ubiquitination and transcriptional regulation to maintain genomic stability. Plays a central role in the control of the cell cycle in response to DNA damage. Acts by mediating ubiquitin E3 ligase activity that is required for its tumor suppressor function. Also forms a heterodimer with CSTF1/CSTF-50 to modulate mRNA processing and RNAP II stability by inhibiting pre-mRNA 3' cleavage. The sequence is that of BRCA1-associated RING domain protein 1 (BARD1) from Homo sapiens (Human).